Consider the following 173-residue polypeptide: Spermidine N(1)-acetyltransferase (173 aa).

In terms of domain architecture, N-acetyltransferase spans 5-162 (LTLRALERGD…GRYQDVKRMY (158 aa)). Spermine contacts are provided by residues methionine 28, glutamate 33, glutamate 41, and 49–52 (HIHD). Position 33 (glutamate 33) interacts with Mg(2+). The spermidine site is built by glutamate 33 and glutamate 41. Residue glutamate 75 coordinates Mg(2+). 84-86 (EFQ) lines the spermine pocket. Acetyl-CoA-binding positions include 87 to 89 (III), 94 to 100 (QGKGFAR), and 127 to 136 (NPKAVHLYEE). Tyrosine 134 (proton donor) is an active-site residue.

It belongs to the acetyltransferase family. As to quaternary structure, homododecamer; dimer of hexamers. Exists in solution in a variety of protein homooligomeric states including dodecamers in an open state. The presence of the polyamines spermidine or spermine shifts the equilibrium to dodecamers and induces the formation of the closed, symmetric dodecamers.

It localises to the cytoplasm. It catalyses the reaction an alkane-alpha,omega-diamine + acetyl-CoA = an N-acetylalkane-alpha,omega-diamine + CoA + H(+). The enzyme catalyses spermidine + acetyl-CoA = N(1)-acetylspermidine + CoA + H(+). The catalysed reaction is spermidine + acetyl-CoA = N(8)-acetylspermidine + CoA + H(+). It carries out the reaction spermine + acetyl-CoA = N(1)-acetylspermine + CoA + H(+). The protein operates within amine and polyamine degradation; spermidine degradation. It participates in amine and polyamine degradation; spermine degradation. Its activity is regulated as follows. Allosterically regulated by polyamines. Polyamines trigger conformational changes and induce the symmetric closed dodecameric state of the protein when they bind to their allosteric sites. Involved in the protection against polyamine toxicity by regulating their concentration. Catalyzes the transfer of an acetyl group from acetyl coenzyme A (AcCoA) to the primary amino groups of spermidine to yield N(1)- and N(8)-acetylspermidine. It can use polyamines such as spermine and N(1)-acetylspermine, but not putrescine or cadaverine. The protein is Spermidine N(1)-acetyltransferase (speG) of Vibrio cholerae serotype O1 (strain ATCC 39315 / El Tor Inaba N16961).